Here is a 233-residue protein sequence, read N- to C-terminus: Leucyl/phenylalanyl-tRNA--protein transferase (233 aa).

This sequence belongs to the L/F-transferase family.

Its subcellular location is the cytoplasm. It carries out the reaction N-terminal L-lysyl-[protein] + L-leucyl-tRNA(Leu) = N-terminal L-leucyl-L-lysyl-[protein] + tRNA(Leu) + H(+). The enzyme catalyses N-terminal L-arginyl-[protein] + L-leucyl-tRNA(Leu) = N-terminal L-leucyl-L-arginyl-[protein] + tRNA(Leu) + H(+). It catalyses the reaction L-phenylalanyl-tRNA(Phe) + an N-terminal L-alpha-aminoacyl-[protein] = an N-terminal L-phenylalanyl-L-alpha-aminoacyl-[protein] + tRNA(Phe). Functions in the N-end rule pathway of protein degradation where it conjugates Leu, Phe and, less efficiently, Met from aminoacyl-tRNAs to the N-termini of proteins containing an N-terminal arginine or lysine. The protein is Leucyl/phenylalanyl-tRNA--protein transferase of Anaeromyxobacter dehalogenans (strain 2CP-1 / ATCC BAA-258).